A 311-amino-acid chain; its full sequence is MSRSRFRGRITGWYLMASSSGEKLDWCGCGRPPRIVVLGAPDKLNVSSAWKRLRPTIQSHAELIAADFEFTYDFSDKEVDLVIVIGGDGSILQSARQMGENQTPVLGINCGRLGFLAALSPEDFLDAWPKVCQGDFSIIRHLMLEVQLIRDDEVIAQSMALNEAAILNGPPFAILDIDLYADGELATQYRCDGLIVATPVGSTAHNLSAGGPILRRQLQAIVISPISPHTLTYRPLVDSADTRLELAVTEPNESTSIVVDGRILGQLKSGDRVRVHRAPVSFEMLRVPGQNDYRTLREKLGWSGRLALRQL.

Aspartate 88 acts as the Proton acceptor in catalysis. Residues 88 to 89 (DG), 162 to 163 (NE), arginine 190, aspartate 192, valine 200, and 203 to 208 (TAHNLS) contribute to the NAD(+) site.

Belongs to the NAD kinase family. Requires a divalent metal cation as cofactor.

The protein localises to the cytoplasm. It catalyses the reaction NAD(+) + ATP = ADP + NADP(+) + H(+). Involved in the regulation of the intracellular balance of NAD and NADP, and is a key enzyme in the biosynthesis of NADP. Catalyzes specifically the phosphorylation on 2'-hydroxyl of the adenosine moiety of NAD to yield NADP. This chain is NAD kinase, found in Rhodopirellula baltica (strain DSM 10527 / NCIMB 13988 / SH1).